The following is a 270-amino-acid chain: MDNRIIYVVSDSVGETAELVVKASLSQFNGSADDTHIRRIPYVEDIGTINEVVSLAKADGGIICFTLVVPEMRKYLVEQAEKANVLYYDIIGPLIDKMESAYGLTAKYEPGRVRQLDEDYFKKVEAIEFAVKYDDGRDPRGILKADIILLGVSRTSKTPLSQYLAHKRLKVANVPIVPEVDPPEELFSVDPKKCIGLKISPDKLNHIRKERLKSLGLNDKAIYANINRIKEELEYFEKIVDRIGCQVVDVSNKAVEETANIIHHLKTKGR.

151 to 158 (GVSRTSKT) is a binding site for ADP.

This sequence belongs to the pyruvate, phosphate/water dikinase regulatory protein family. PDRP subfamily.

It carries out the reaction N(tele)-phospho-L-histidyl/L-threonyl-[pyruvate, phosphate dikinase] + ADP = N(tele)-phospho-L-histidyl/O-phospho-L-threonyl-[pyruvate, phosphate dikinase] + AMP + H(+). The catalysed reaction is N(tele)-phospho-L-histidyl/O-phospho-L-threonyl-[pyruvate, phosphate dikinase] + phosphate + H(+) = N(tele)-phospho-L-histidyl/L-threonyl-[pyruvate, phosphate dikinase] + diphosphate. Its function is as follows. Bifunctional serine/threonine kinase and phosphorylase involved in the regulation of the pyruvate, phosphate dikinase (PPDK) by catalyzing its phosphorylation/dephosphorylation. The sequence is that of Putative pyruvate, phosphate dikinase regulatory protein from Bacillus velezensis (strain DSM 23117 / BGSC 10A6 / LMG 26770 / FZB42) (Bacillus amyloliquefaciens subsp. plantarum).